The following is a 78-amino-acid chain: Putative snRNP Sm-like protein (78 aa).

The Sm domain maps to 4–76; it reads RPLDVIHRSL…VLAISPVDVG (73 aa).

This sequence belongs to the snRNP Sm proteins family.

The protein is Putative snRNP Sm-like protein of Thermococcus onnurineus (strain NA1).